We begin with the raw amino-acid sequence, 425 residues long: ATP-dependent RNA helicase eIF4A (425 aa).

A Q motif motif is present at residues 38–66 (DTWEDYGLKEDLLKGIYSIGFETPSFIQK). The Helicase ATP-binding domain occupies 69–241 (IQPIIDGRDI…EEILINPVII (173 aa)). 82–89 (AQSGTGKT) contacts ATP. The short motif at 187–190 (DEAD) is the DEAD box element. The region spanning 252-425 (GIRQYFIDLR…KELPADFSFQ (174 aa)) is the Helicase C-terminal domain.

This sequence belongs to the DEAD box helicase family. eIF4A subfamily. In terms of assembly, component of the eIF4F complex, which composition varies with external and internal environmental conditions. It is composed of at least eIF4A, eIF4E and eIF4G.

Its subcellular location is the cytoplasm. It carries out the reaction ATP + H2O = ADP + phosphate + H(+). In terms of biological role, ATP-dependent RNA helicase which is a subunit of the eIF4F complex involved in cap recognition and is required for mRNA binding to ribosome. In the current model of translation initiation, eIF4A unwinds RNA secondary structures in the 5'-UTR of mRNAs which is necessary to allow efficient binding of the small ribosomal subunit, and subsequent scanning for the initiator codon. In Encephalitozoon cuniculi (strain GB-M1) (Microsporidian parasite), this protein is ATP-dependent RNA helicase eIF4A (TIF1).